We begin with the raw amino-acid sequence, 321 residues long: Lipoyl synthase (321 aa).

[4Fe-4S] cluster-binding residues include Cys68, Cys73, Cys79, Cys94, Cys98, Cys101, and Ser308. A Radical SAM core domain is found at 80–297 (FNHGTATFMI…KEEALAMGFT (218 aa)).

This sequence belongs to the radical SAM superfamily. Lipoyl synthase family. [4Fe-4S] cluster is required as a cofactor.

It is found in the cytoplasm. The catalysed reaction is [[Fe-S] cluster scaffold protein carrying a second [4Fe-4S](2+) cluster] + N(6)-octanoyl-L-lysyl-[protein] + 2 oxidized [2Fe-2S]-[ferredoxin] + 2 S-adenosyl-L-methionine + 4 H(+) = [[Fe-S] cluster scaffold protein] + N(6)-[(R)-dihydrolipoyl]-L-lysyl-[protein] + 4 Fe(3+) + 2 hydrogen sulfide + 2 5'-deoxyadenosine + 2 L-methionine + 2 reduced [2Fe-2S]-[ferredoxin]. Its pathway is protein modification; protein lipoylation via endogenous pathway; protein N(6)-(lipoyl)lysine from octanoyl-[acyl-carrier-protein]: step 2/2. In terms of biological role, catalyzes the radical-mediated insertion of two sulfur atoms into the C-6 and C-8 positions of the octanoyl moiety bound to the lipoyl domains of lipoate-dependent enzymes, thereby converting the octanoylated domains into lipoylated derivatives. This is Lipoyl synthase from Photorhabdus laumondii subsp. laumondii (strain DSM 15139 / CIP 105565 / TT01) (Photorhabdus luminescens subsp. laumondii).